A 167-amino-acid chain; its full sequence is Leptin (167 aa).

A signal peptide spans 1–21 (MCWRPLCRFLWLWSYLSYVQA). A disulfide bond links cysteine 117 and cysteine 167.

Belongs to the leptin family.

It localises to the secreted. In terms of biological role, key player in the regulation of energy balance and body weight control. Once released into the circulation, has central and peripheral effects by binding LEPR, found in many tissues, which results in the activation of several major signaling pathways. In the hypothalamus, acts as an appetite-regulating factor that induces a decrease in food intake and an increase in energy consumption by inducing anorexinogenic factors and suppressing orexigenic neuropeptides, also regulates bone mass and secretion of hypothalamo-pituitary-adrenal hormones. In the periphery, increases basal metabolism, influences reproductive function, regulates pancreatic beta-cell function and insulin secretion, is pro-angiogenic for endothelial cell and affects innate and adaptive immunity. In the arcuate nucleus of the hypothalamus, activates by depolarization POMC neurons inducing FOS and SOCS3 expression to release anorexigenic peptides and inhibits by hyperpolarization NPY neurons inducing SOCS3 with a consequent reduction on release of orexigenic peptides. In addition to its known satiety inducing effect, has a modulatory role in nutrient absorption. In the intestine, reduces glucose absorption by enterocytes by activating PKC and leading to a sequential activation of p38, PI3K and ERK signaling pathways which exerts an inhibitory effect on glucose absorption. Acts as a growth factor on certain tissues, through the activation of different signaling pathways increases expression of genes involved in cell cycle regulation such as CCND1, via JAK2-STAT3 pathway, or VEGFA, via MAPK1/3 and PI3K-AKT1 pathways. May also play an apoptotic role via JAK2-STAT3 pathway and up-regulation of BIRC5 expression. Pro-angiogenic, has mitogenic activity on vascular endothelial cells and plays a role in matrix remodeling by regulating the expression of matrix metalloproteinases (MMPs) and tissue inhibitors of metalloproteinases (TIMPs). In innate immunity, modulates the activity and function of neutrophils by increasing chemotaxis and the secretion of oxygen radicals. Increases phagocytosis by macrophages and enhances secretion of pro-inflammatory mediators. Increases cytotoxic ability of NK cells. Plays a pro-inflammatory role, in synergy with IL1B, by inducing NOS2 which promotes the production of IL6, IL8 and Prostaglandin E2, through a signaling pathway that involves JAK2, PI3K, MAP2K1/MEK1 and MAPK14/p38. In adaptive immunity, promotes the switch of memory T-cells towards T helper-1 cell immune responses. Increases CD4(+)CD25(-) T-cell proliferation and reduces autophagy during TCR (T-cell receptor) stimulation, through MTOR signaling pathway activation and BCL2 up-regulation. This is Leptin (Lep) from Rattus norvegicus (Rat).